The sequence spans 760 residues: Sphingosine kinase B (760 aa).

Residues 1–108 are disordered; that stretch reads MENNNNEPAE…NNNNNEPVTS (108 aa). The segment covering 12-39 has biased composition (basic and acidic residues); sequence VQEKGPKLKNDIDLNDQFKDEKEKKEEI. Low complexity predominate over residues 40–106; it reads SSSSIENKNN…NNNNNNNEPV (67 aa). One can recognise a DAGKc domain in the interval 247 to 383; that stretch reads PKNRKIRILI…LDVCIVQQPT (137 aa). ATP contacts are provided by residues 257 to 259 and Thr288; that span reads NPK. Substrate is bound at residue 313-316; it reads SGDG. The Proton donor/acceptor role is filled by Asp315. Residues Glu320 and 345 to 347 contribute to the ATP site; that span reads GTG. Positions 394 to 438 are disordered; the sequence is TVTTTTTTTSPTSASPTITSANNNNNNNNNNNNNNNNNNNNNNNN. Residue Asp461 participates in substrate binding. ATP-binding residues include Arg468 and Arg474. Positions 535–605 are disordered; sequence DNDNNNKNKN…SSPRSDINMS (71 aa). Over residues 549-597 the composition is skewed to low complexity; that stretch reads EINSTTSNNNNNNNTTTTSTSSSTSTSTSTSSLTATTTTAKSTNSLSSS. 734 to 736 provides a ligand contact to ATP; sequence DGE.

It catalyses the reaction a sphingoid base + ATP = a sphingoid 1-phosphate + ADP + H(+). Inhibited by N,N,-dimethylsphingosine. Its function is as follows. Catalyzes the phosphorylation of sphingosine to form sphingosine-1-phosphate (S1P), which probably acts intracellularly as a second messenger perhaps by promoting cell proliferation. The protein is Sphingosine kinase B (sgkB) of Dictyostelium discoideum (Social amoeba).